The following is a 154-amino-acid chain: Host transcription reprogramming factor 5 (154 aa).

The first 19 residues, 1 to 19 (MQILRIAQLMALLATCASA), serve as a signal peptide directing secretion. The disordered stretch occupies residues 24–85 (TGSRVYSRDV…KRIKAEQNAR (62 aa)). The segment covering 35-50 (QTQGGFSGSPTTNSPD) has biased composition (polar residues). A compositionally biased stretch (basic and acidic residues) spans 69-85 (ETEKERKKRIKAEQNAR). The C2H2-type; degenerate zinc finger occupies 96–121 (YQCPYCSDPTVFSHSDALGRHIYTIH).

Its subcellular location is the secreted. It localises to the host nucleus. Probable secreted effector that translocates into the nuclei of host cells to reprogram the expression of targeted genes by binding on effector binding elements in rice. The protein is Host transcription reprogramming factor 5 of Pyricularia oryzae (strain 70-15 / ATCC MYA-4617 / FGSC 8958) (Rice blast fungus).